Consider the following 466-residue polypeptide: Vimentin (466 aa).

Residues 1 to 13 are compositionally biased toward low complexity; it reads MSTRSVSSSSYRR. The disordered stretch occupies residues 1-32; it reads MSTRSVSSSSYRRMFGGPGTGSRPSSTRSYVT. An N-acetylserine modification is found at S2. The tract at residues 2–95 is head; the sequence is STRSVSSSSY…FSLADAINTE (94 aa). S5, S7, S8, S9, and S10 each carry phosphoserine. S7 carries an O-linked (GlcNAc) serine; alternate glycan. Position 20 is a phosphothreonine (T20). The span at 21-32 shows a compositional bias: low complexity; the sequence is GSRPSSTRSYVT. 2 positions are modified to phosphoserine: S25 and S26. The O-linked (GlcNAc) threonine glycan is linked to T33. 6 positions are modified to phosphoserine: S34, S39, S42, S47, S49, and S51. O-linked (GlcNAc) serine; alternate glycosylation is present at S34. The residue at position 53 (Y53) is a Phosphotyrosine. Phosphoserine occurs at positions 55 and 56. At Y61 the chain carries Phosphotyrosine. Residues S66, S72, S73, S83, and S87 each carry the phosphoserine modification. The coil 1A stretch occupies residues 96-131; that stretch reads FKNTRTNEKVELQELNDRFANYIDKVRFLEQQNKIL. A coiled-coil region spans residues 96–131; it reads FKNTRTNEKVELQELNDRFANYIDKVRFLEQQNKIL. The IF rod domain occupies 103–411; it reads EKVELQELND…KLLEGEESRI (309 aa). K104 participates in a covalent cross-link: Glycyl lysine isopeptide (Lys-Gly) (interchain with G-Cter in SUMO2). Y117 carries the phosphotyrosine modification. N6-acetyllysine; alternate occurs at positions 120, 129, and 139. 2 positions are modified to N6-succinyllysine; alternate: K120 and K129. Glycyl lysine isopeptide (Lys-Gly) (interchain with G-Cter in SUMO2); alternate cross-links involve residues K120, K129, and K139. The tract at residues 132-153 is linker 1; that stretch reads LAELEQLKGQGKSRLGDLYEEE. Residue S144 is modified to Phosphoserine. Positions 154–245 form a coiled coil; that stretch reads MRELRRQVDQ…KLHDEEIQEL (92 aa). The coil 1B stretch occupies residues 154 to 245; it reads MRELRRQVDQ…KLHDEEIQEL (92 aa). K168 carries the N6-acetyllysine modification. K188 carries the post-translational modification N6-acetyllysine; alternate. K188 carries the post-translational modification N6-succinyllysine; alternate. At S214 the chain carries Phosphoserine. The residue at position 223 (K223) is an N6-acetyllysine; alternate. K223 participates in a covalent cross-link: Glycyl lysine isopeptide (Lys-Gly) (interchain with G-Cter in SUMO2); alternate. A Phosphoserine modification is found at S226. An N6-acetyllysine modification is found at K235. The segment at 246-268 is linker 12; the sequence is QAQIQDQHVQIDMDVSKPDLTAA. K262 is covalently cross-linked (Glycyl lysine isopeptide (Lys-Gly) (interchain with G-Cter in SUMO2)). Positions 269–407 are coil 2; the sequence is LRDVRQQYES…ATYRKLLEGE (139 aa). K294 carries the post-translational modification N6-acetyllysine; alternate. Residue K294 is modified to N6-succinyllysine; alternate. A Glycyl lysine isopeptide (Lys-Gly) (interchain with G-Cter in SUMO2); alternate cross-link involves residue K294. S299 bears the Phosphoserine mark. Residues 303 to 407 adopt a coiled-coil conformation; it reads NRNNDALRQA…ATYRKLLEGE (105 aa). K313 is covalently cross-linked (Glycyl lysine isopeptide (Lys-Gly) (interchain with G-Cter in SUMO2)). At S325 the chain carries Phosphoserine. A [IL]-x-C-x-x-[DE] motif motif is present at residues 326 to 329; sequence LTCE. K373 is modified (N6-acetyllysine; alternate). K373 is covalently cross-linked (Glycyl lysine isopeptide (Lys-Gly) (interchain with G-Cter in SUMO2); alternate). The tail stretch occupies residues 408–466; the sequence is ESRIALPLPNFSSLNLRETNLDSLPLVDTHSKRTLLIKTVETRDGQVINETSQHHDDLE. Phosphoserine occurs at positions 409, 419, and 420. A Phosphothreonine modification is found at T426. The residue at position 430 (S430) is a Phosphoserine. Residue T436 is modified to Phosphothreonine. S438 is subject to Phosphoserine. Residue K439 forms a Glycyl lysine isopeptide (Lys-Gly) (interchain with G-Cter in SUMO2) linkage. N6-acetyllysine; alternate is present on K445. K445 carries the N6-succinyllysine; alternate modification. Residue K445 forms a Glycyl lysine isopeptide (Lys-Gly) (interchain with G-Cter in SUMO2); alternate linkage. K445 participates in a covalent cross-link: Glycyl lysine isopeptide (Lys-Gly) (interchain with G-Cter in SUMO1); alternate. Residues T446 and T458 each carry the phosphothreonine modification. S459 carries the post-translational modification Phosphoserine.

The protein belongs to the intermediate filament family. As to quaternary structure, homomer assembled from elementary dimers. Identified in complexes that contain VIM, EZR, AHNAK, BFSP1, BFSP2, ANK2, PLEC, PRX and spectrin. Interacts with BCAS3. Interacts with LGSN. Interacts with SYNM. Interacts (via rod region) with PLEC (via CH 1 domain). Interacts with STK33. Interacts with LARP6. Interacts with RAB8B. Interacts with TOR1A; the interaction associates TOR1A with the cytoskeleton. Interacts with TOR1AIP1. Interacts with TOR1AIP1. Interacts with DIAPH1. Interacts with EPPK1; interaction is dependent of higher-order structure of intermediate filament. Interacts with the non-receptor tyrosine kinase SRMS; the interaction leads to phosphorylation of VIM. Interacts with NOD2. Interacts (via head region) with CORO1C. Interacts with HDGF. Interacts with PRKCE (via phorbol-ester/DAG-type 2 domain). Interacts with BFSP2. Interacts with PPL. Interacts with PKP1 and PKP2. Interacts with SCRIB (via PDZ domains); the interaction protects SCRIB from proteasomal degradation and facilitates SCRIB localization to intermediate filaments, the interaction is reduced by cell contact inhibition. In terms of processing, filament disassembly during mitosis is promoted by phosphorylation at Ser-55 as well as by nestin. One of the most prominent phosphoproteins in various cells of mesenchymal origin. Phosphorylation is enhanced during cell division, at which time vimentin filaments are significantly reorganized. Phosphorylation by PKN1 inhibits the formation of filaments. Phosphorylated at Ser-56 by CDK5 during neutrophil secretion in the cytoplasm. Phosphorylated by STK33. Phosphorylated on tyrosine residues by SRMS. Post-translationally, O-glycosylated during cytokinesis at sites identical or close to phosphorylation sites, this interferes with the phosphorylation status. S-nitrosylation is induced by interferon-gamma and oxidatively-modified low-densitity lipoprotein (LDL(ox)) possibly implicating the iNOS-S100A8/9 transnitrosylase complex.

Its subcellular location is the cytoplasm. The protein localises to the cytoskeleton. The protein resides in the nucleus matrix. It is found in the cell membrane. Vimentins are class-III intermediate filaments found in various non-epithelial cells, especially mesenchymal cells. Vimentin is attached to the nucleus, endoplasmic reticulum, and mitochondria, either laterally or terminally. Plays a role in cell directional movement, orientation, cell sheet organization and Golgi complex polarization at the cell migration front. Protects SCRIB from proteasomal degradation and facilitates its localization to intermediate filaments in a cell contact-mediated manner. In terms of biological role, involved with LARP6 in the stabilization of type I collagen mRNAs for CO1A1 and CO1A2. This is Vimentin (VIM) from Canis lupus familiaris (Dog).